A 356-amino-acid chain; its full sequence is uncharacterized protein (356 aa).

Positions 25-72 are disordered; sequence EENNQENNKKFIEEFYPDKESDKNFSDDDSDDSDDSDDSENSDEEFDN. A compositionally biased stretch (basic and acidic residues) spans 31–50; sequence NNKKFIEEFYPDKESDKNFS. Residues 51–70 are compositionally biased toward acidic residues; it reads DDDSDDSDDSDDSENSDEEF. A coiled-coil region spans residues 328–356; sequence EDTLNHSHSNKIKELENKITELKYQNEIN.

It belongs to the mimivirus L17/R827 family.

This is an uncharacterized protein from Acanthamoeba polyphaga mimivirus (APMV).